The sequence spans 309 residues: Ribonuclease Z (309 aa).

Zn(2+) contacts are provided by His63, His65, Asp67, His68, His141, Asp212, and His270. Asp67 acts as the Proton acceptor in catalysis.

The protein belongs to the RNase Z family. As to quaternary structure, homodimer. Requires Zn(2+) as cofactor.

The catalysed reaction is Endonucleolytic cleavage of RNA, removing extra 3' nucleotides from tRNA precursor, generating 3' termini of tRNAs. A 3'-hydroxy group is left at the tRNA terminus and a 5'-phosphoryl group is left at the trailer molecule.. Zinc phosphodiesterase, which displays some tRNA 3'-processing endonuclease activity. Probably involved in tRNA maturation, by removing a 3'-trailer from precursor tRNA. The protein is Ribonuclease Z of Lactobacillus johnsonii (strain CNCM I-12250 / La1 / NCC 533).